The primary structure comprises 934 residues: Complement component C6 (934 aa).

The first 21 residues, 1–21 (MARRSVLYFILLNALINKGQA), serve as a signal peptide directing secretion. 11 cysteine pairs are disulfide-bonded: Cys-22/Cys-61, Cys-24/Cys-65, Cys-35/Cys-73, Cys-39/Cys-78, Cys-82/Cys-117, Cys-93/Cys-127, Cys-96/Cys-133, Cys-140/Cys-151, Cys-146/Cys-164, Cys-158/Cys-173, and Cys-180/Cys-218. TSP type-1 domains are found at residues 22-79 (CFCD…QRCP) and 81-134 (NCLL…KLCK). C-linked (Man) tryptophan glycosylation is present at Trp-29. C-linked (Man) tryptophan; partial glycosylation occurs at Trp-32. The O-linked (Fuc...) threonine glycan is linked to Thr-38. A glycan (C-linked (Man) tryptophan; partial) is linked at Trp-90. Positions 138 to 175 (ADCKNKFRCDSGRCIARKLECNGENDCGDNSDERDCGR) constitute an LDL-receptor class A domain. Positions 156, 159, 161, 163, 169, and 170 each coordinate Ca(2+). The 347-residue stretch at 176–522 (TKAVCTRKYN…EYAAKFDPCQ (347 aa)) folds into the MACPF domain. The beta stranded transmembrane segment at 278-290 (SFSVPIFYSSKRS) threads the bilayer. Asn-324 is a glycosylation site (N-linked (GlcNAc...) asparagine). Thr-392 carries O-linked (Fuc...) threonine glycosylation. 16 disulfide bridges follow: Cys-399–Cys-420, Cys-499–Cys-623, Cys-521–Cys-570, Cys-523–Cys-539, Cys-526–Cys-541, Cys-543–Cys-552, Cys-577–Cys-611, Cys-589–Cys-601, Cys-644–Cys-686, Cys-672–Cys-699, Cys-704–Cys-746, Cys-732–Cys-761, Cys-773–Cys-823, Cys-784–Cys-801, Cys-786–Cys-837, and Cys-793–Cys-816. A beta stranded membrane pass occupies residues 402-415 (IETKKRVLFAKKTK). The EGF-like domain occupies 523–553 (CAPCPNNGRPTLSGTECLCVCQSGTYGENCE). Positions 565-612 (DGQWGCWSSWSTCDATYKRSRTRECNNPAPQRGGKRCEGEKRQEEDCT) constitute a TSP type-1 3 domain. C-linked (Man) tryptophan; partial glycosylation is found at Trp-568, Trp-571, and Trp-574. 2 CCP regions span residues 611-688 (CTFS…RCLP) and 689-765 (DGTW…EKDT). 2 Sushi domains span residues 642-701 (SGCP…ECQR) and 702-763 (TECI…TCEK). The interval 642–934 (SGCPQPVPPE…EILHPGKCLA (293 aa)) is C5b-binding domain. Positions 766-840 (LTKLKGHCQL…FLHIGSCQDG (75 aa)) are factor I module (FIM) 1. One can recognise a Kazal-like 1 domain in the interval 780 to 839 (SGSECICMSPEEDCSHHSEDLCVFDTDSNDYFTSPACKFLAEKCLNNQQLHFLHIGSCQD). An N-linked (GlcNAc...) asparagine glycan is attached at Asn-855. Residues 858 to 934 (KKESCGYDTC…EILHPGKCLA (77 aa)) form a factor I module (FIM) 2 region. Disulfide bonds link Cys-862-Cys-873, Cys-867-Cys-919, Cys-880-Cys-897, Cys-882-Cys-932, and Cys-888-Cys-912. Residues 876-934 (STSKCVCLLPPQCFKGGNQLYCVKMGSSTSEKTLNICEVGTIRCANRKMEILHPGKCLA) enclose the Kazal-like 2 domain.

The protein belongs to the complement C6/C7/C8/C9 family. As to quaternary structure, component of the membrane attack complex (MAC), composed of complement C5b, C6, C7, C8A, C8B, C8G and multiple copies of the pore-forming subunit C9. Post-translationally, all cysteine residues are assumed to be cross-linked to one another. Individual modules containing an even number of conserved cysteine residues are supposed to have disulfide linkages only within the same module.

The protein localises to the secreted. The protein resides in the target cell membrane. Its activity is regulated as follows. Membrane attack complex (MAC) assembly is inhibited by CD59, thereby protecting self-cells from damage during complement activation. MAC assembly is also inhibited by clusterin (CLU) chaperones that inhibit polymerization of C9. Its function is as follows. Component of the membrane attack complex (MAC), a multiprotein complex activated by the complement cascade, which inserts into a target cell membrane and forms a pore, leading to target cell membrane rupture and cell lysis. The MAC is initiated by proteolytic cleavage of C5 into complement C5b in response to the classical, alternative, lectin and GZMK complement pathways. The complement pathways consist in a cascade of proteins that leads to phagocytosis and breakdown of pathogens and signaling that strengthens the adaptive immune system. Together with component C5b, involved in MAC complex assembly: complement C5b and C6 associate with the outer leaflet of target cell membrane, reducing the energy for membrane bending. This Homo sapiens (Human) protein is Complement component C6.